Here is a 502-residue protein sequence, read N- to C-terminus: MEFSVKSGSPEKQRSACIVVGVYEPRRLSGIAEQLDKISEGYISNLLRRGDLEGKPGQMLLLHHVPNVLSERVLLVGCGKERELDERQYKQIITKTISTLNETGSMEAVCFLTELHVKGRDTYWKVRQAVETTQASLYSFDALKTRKGETRRPLRKMVFNVPTRKELTIGERAVEHGMAVSAGMHLCRDVANMPPNICNPAYLASQARQMAETHDKLKVTTIGEEQMAKLGMNSYLAVGRGSSNESIMTVMEYKGAVDSADKPIVLVGKGLTFDSGGISLKPGEAMDEMKYDMGGAAGVIGAMKALCEMNLPINVIGILAGCENMPSGNSYRPGDILTTMSGQTVEVLNTDAEGRLVLCDVLTYVERFEPELVIDTATLTGACVIALGKHASGLFSSHNPLAHELLNAGEQSGDRAWRMPLWEEYQDMLDSPFADMTNLGGRPAGSITAACFLSRFTKKYNWAHLDVAGTAWNSGANKGSTGRPVPILSQFLINRSGVEISE.

K269 and D274 together coordinate Mn(2+). K281 is an active-site residue. Residues D292, D351, and E353 each coordinate Mn(2+). R355 is a catalytic residue.

It belongs to the peptidase M17 family. The cofactor is Mn(2+).

Its subcellular location is the cytoplasm. It catalyses the reaction Release of an N-terminal amino acid, Xaa-|-Yaa-, in which Xaa is preferably Leu, but may be other amino acids including Pro although not Arg or Lys, and Yaa may be Pro. Amino acid amides and methyl esters are also readily hydrolyzed, but rates on arylamides are exceedingly low.. The catalysed reaction is Release of an N-terminal amino acid, preferentially leucine, but not glutamic or aspartic acids.. Presumably involved in the processing and regular turnover of intracellular proteins. Catalyzes the removal of unsubstituted N-terminal amino acids from various peptides. This chain is Probable cytosol aminopeptidase, found in Shewanella denitrificans (strain OS217 / ATCC BAA-1090 / DSM 15013).